The sequence spans 124 residues: Orexigenic neuropeptide QRFP (124 aa).

The first 17 residues, 1–17 (MRGFRPLLSLLLPLSAC), serve as a signal peptide directing secretion. Positions 18–79 (FPLLDRRGPT…REHTGFRLGR (62 aa)) are excised as a propeptide. The interval 63-101 (REQQASHREHTGFRLGRQDGSSEAAGFLPADSEKASGPL) is disordered. Phenylalanine 122 carries the post-translational modification Phenylalanine amide.

Belongs to the RFamide neuropeptide family. Ligand for the G-protein coupled receptor QRFPR/GPR103. Expressed in the brain with highest levels in the periventricular hypothalamic nucleus and lateral hypothalamic areas. Expressed at moderate levels in the adrenal gland, eye, heart, intestine, liver, lung, kidney, mesenteric lymph node, ovary, placenta, Peyer patches, skin, spleen, stomach, testis, thymus and uterus.

It is found in the secreted. Functionally, stimulates feeding and grooming behavior, metabolic rate and locomotor activity and increases blood pressure. May have orexigenic activity. May promote aldosterone secretion by the adrenal gland. The polypeptide is Orexigenic neuropeptide QRFP (Mus musculus (Mouse)).